The following is a 452-amino-acid chain: Phosphoglucosamine mutase (452 aa).

Residue S103 is the Phosphoserine intermediate of the active site. Residues S103, D243, D245, and D247 each contribute to the Mg(2+) site. S103 carries the phosphoserine modification.

Belongs to the phosphohexose mutase family. It depends on Mg(2+) as a cofactor. Activated by phosphorylation.

It carries out the reaction alpha-D-glucosamine 1-phosphate = D-glucosamine 6-phosphate. In terms of biological role, catalyzes the conversion of glucosamine-6-phosphate to glucosamine-1-phosphate. The polypeptide is Phosphoglucosamine mutase (Limosilactobacillus fermentum (strain NBRC 3956 / LMG 18251) (Lactobacillus fermentum)).